We begin with the raw amino-acid sequence, 426 residues long: MSAIIDIHAREILDSRGNPTVEVEVRLESGAFGRAAVPSGASTGAHEAVELRDGDKARYGGKGVLRAVESVNGEIFDTLSGLEATEQVAIDSIMIELDGTPNKNRLGANAILGVSLAVAKAAADELDQPLYRYVGGTNARTLPVPMMNIINGGAHADNPIDIQEFMVMPVGAETCADSIRMGAEIFHALKKKLKDAGHNTAVGDEGGFAPNLKSTDEALGFIMKAVEAAGYRPGEDVLLALDAASTEFYRNGRYELAGEGKSLDAAGMVAYWQDLVGRYPIVSVEDGMAEDDWDGWKALTDAIGGSVQLVGDDLFVTNPTRLSEGISRGIANSILVKVNQIGSLTETLEAVRIAQSNGYTAVMSHRSGETEDSTIADLAVATNCGQIKTGSLSRSDRIAKYNQLIRIEEGLGRARIFPGRAALKRG.

Gln-163 serves as a coordination point for (2R)-2-phosphoglycerate. Glu-205 (proton donor) is an active-site residue. The Mg(2+) site is built by Asp-242, Glu-285, and Asp-312. (2R)-2-phosphoglycerate is bound by residues Lys-337, Arg-366, Ser-367, and Lys-388. The active-site Proton acceptor is the Lys-337.

Belongs to the enolase family. The cofactor is Mg(2+).

The protein localises to the cytoplasm. It is found in the secreted. Its subcellular location is the cell surface. It carries out the reaction (2R)-2-phosphoglycerate = phosphoenolpyruvate + H2O. It functions in the pathway carbohydrate degradation; glycolysis; pyruvate from D-glyceraldehyde 3-phosphate: step 4/5. In terms of biological role, catalyzes the reversible conversion of 2-phosphoglycerate (2-PG) into phosphoenolpyruvate (PEP). It is essential for the degradation of carbohydrates via glycolysis. The polypeptide is Enolase (Rhodospirillum centenum (strain ATCC 51521 / SW)).